The following is a 150-amino-acid chain: MQIILLDKVVNLGNLGDVVKVKDGYARNFLIPFGRARRATAAAIKEFEVKRAELEKAAAAKLAEMQVQGEKLGGTTVKLTQKAGVDGRLFGSVTNADIAQEVTKQGFAVSKSQIRLPNGPIKTVGDHAINIALHTDVVVDITVTVYGETA.

Belongs to the bacterial ribosomal protein bL9 family.

Binds to the 23S rRNA. The sequence is that of Large ribosomal subunit protein bL9 from Polaromonas naphthalenivorans (strain CJ2).